A 144-amino-acid polypeptide reads, in one-letter code: MNLNELQPAAGSRKLRNRVGRGTSSGNGKTSGRGQKGQKARGKVRLGFEGGQMPLYRRIPKRGFTNISRKEFAVVNLEKLNTFADGTEVTPALLIENGIVKNQKSGIKVLAVGQLEKKLTVKAHKFSGAAKAAIEQAGGTTEVL.

Positions methionine 1–valine 44 are disordered. Residues threonine 23–glutamine 35 are compositionally biased toward gly residues.

This sequence belongs to the universal ribosomal protein uL15 family. Part of the 50S ribosomal subunit.

In terms of biological role, binds to the 23S rRNA. This is Large ribosomal subunit protein uL15 from Leuconostoc citreum (strain KM20).